A 301-amino-acid polypeptide reads, in one-letter code: Small ribosomal subunit protein uS2 (301 aa).

The disordered stretch occupies residues 237 to 301; it reads PTESWNDTVV…QDWSNSTSQW (65 aa). The segment covering 264–278 has biased composition (low complexity); sequence PQYAPAPQAAAAPVA.

The protein belongs to the universal ribosomal protein uS2 family. In terms of assembly, component of the small ribosomal subunit. Mature ribosomes consist of a small (40S) and a large (60S) subunit. The 40S subunit contains about 33 different proteins and 1 molecule of RNA (18S). The 60S subunit contains about 49 different proteins and 3 molecules of RNA (28S, 5.8S and 5S). Interacts with ribosomal protein S21.

It localises to the cytoplasm. Functionally, required for the assembly and/or stability of the 40S ribosomal subunit. Required for the processing of the 20S rRNA-precursor to mature 18S rRNA in a late step of the maturation of 40S ribosomal subunits. This chain is Small ribosomal subunit protein uS2, found in Diaphorina citri (Asian citrus psyllid).